A 272-amino-acid polypeptide reads, in one-letter code: Undecaprenyl-diphosphatase (272 aa).

8 helical membrane passes run 5–25 (YSLF…FLPV), 45–65 (AKTF…VVFW), 88–108 (HLTL…GLAF), 115–135 (LFNP…LLAA), 152–171 (TYRQ…WPGF), 189–209 (YAAS…ASGL), 221–241 (GDLP…LIAI), and 251–271 (ISFV…YWVF).

This sequence belongs to the UppP family.

It localises to the cell inner membrane. The catalysed reaction is di-trans,octa-cis-undecaprenyl diphosphate + H2O = di-trans,octa-cis-undecaprenyl phosphate + phosphate + H(+). Functionally, catalyzes the dephosphorylation of undecaprenyl diphosphate (UPP). Confers resistance to bacitracin. The polypeptide is Undecaprenyl-diphosphatase (Yersinia enterocolitica serotype O:8 / biotype 1B (strain NCTC 13174 / 8081)).